The sequence spans 694 residues: Cyclic nucleotide-gated channel beta-3 (694 aa).

Residues Met-1 to Tyr-210 are Cytoplasmic-facing. Disordered stretches follow at residues Cys-24–Cys-82 and Glu-146–Gln-177. Polar residues-rich tracts occupy residues Asn-26 to Asn-40 and Ala-153 to Glu-168. The chain crosses the membrane as a helical span at residues Leu-211–Phe-234. The Extracellular portion of the chain corresponds to Pro-235–Asn-241. The chain crosses the membrane as a helical span at residues Lys-242–Leu-262. Residues Ile-263 to Lys-291 lie on the Cytoplasmic side of the membrane. The chain crosses the membrane as a helical span at residues Phe-292–Phe-309. The Extracellular segment spans residues Gly-310–Asn-312. The helical transmembrane segment at Pro-313–Phe-327 threads the bilayer. Residues Glu-328–Ala-340 lie on the Cytoplasmic side of the membrane. The ion conduction pathway stretch occupies residues Ala-340–Ala-439. A helical membrane pass occupies residues Tyr-341–Tyr-363. Residues Tyr-364–Lys-385 are Extracellular-facing. 2 helical membrane passes run Tyr-386–Ile-412 and Val-413–Ile-437. The interval Thr-399 to Gly-402 is selectivity filter. Topologically, residues Gly-438–Lys-694 are cytoplasmic. Residues Ala-442–Lys-518 are C-linker. The tract at residues Thr-522–Leu-638 is cyclic nucleotide-binding domain. Positions 583, 584, 596, and 597 each coordinate 3',5'-cyclic GMP.

The protein belongs to the cyclic nucleotide-gated cation channel (TC 1.A.1.5) family. CNGB3 subfamily. Forms heterotetrameric channels composed of CNGA3 and CNGB3 subunits with 3:1 stoichiometry. In terms of tissue distribution, small subset of retinal photoreceptor cells and testis.

It is found in the cell membrane. It carries out the reaction Ca(2+)(in) = Ca(2+)(out). The catalysed reaction is Na(+)(in) = Na(+)(out). The enzyme catalyses K(+)(in) = K(+)(out). It catalyses the reaction NH4(+)(in) = NH4(+)(out). It carries out the reaction Rb(+)(in) = Rb(+)(out). The catalysed reaction is Li(+)(in) = Li(+)(out). The enzyme catalyses Cs(+)(in) = Cs(+)(out). In terms of biological role, pore-forming subunit of the cone cyclic nucleotide-gated channel. Mediates cone photoresponses at bright light converting transient changes in intracellular cGMP levels into electrical signals. In the dark, cGMP levels are high and keep the channel open enabling a steady inward current carried by Na(+) and Ca(2+) ions that leads to membrane depolarization and neurotransmitter release from synaptic terminals. Upon photon absorption cGMP levels decline leading to channel closure and membrane hyperpolarization that ultimately slows neurotransmitter release and signals the presence of light, the end point of the phototransduction cascade. Conducts cGMP- and cAMP-gated ion currents, with permeability for monovalent and divalent cations. The polypeptide is Cyclic nucleotide-gated channel beta-3 (Mus musculus (Mouse)).